We begin with the raw amino-acid sequence, 349 residues long: Nuclear distribution protein nudE homolog 1-A (349 aa).

Residues 22–189 are a coiled coil; the sequence is VAMKYKQCSE…ELAVQQKQEK (168 aa).

This sequence belongs to the nudE family. Self-associates. Interacts with pafah1b1. Post-translationally, phosphorylated in mitosis.

It localises to the cytoplasm. The protein resides in the cytoskeleton. It is found in the microtubule organizing center. The protein localises to the centrosome. Its subcellular location is the spindle. It localises to the chromosome. The protein resides in the centromere. It is found in the kinetochore. The protein localises to the cleavage furrow. Its subcellular location is the cytoplasmic vesicle membrane. Functionally, required for centrosome duplication and formation and function of the mitotic spindle. The polypeptide is Nuclear distribution protein nudE homolog 1-A (nde1-a) (Xenopus laevis (African clawed frog)).